The following is a 492-amino-acid chain: 3-octaprenyl-4-hydroxybenzoate carboxy-lyase (492 aa).

Asparagine 175 serves as a coordination point for Mn(2+). Residues 178-180 (IYR), 192-194 (RWL), and 197-198 (RG) contribute to the prenylated FMN site. Glutamate 241 serves as a coordination point for Mn(2+). The Proton donor role is filled by aspartate 290.

The protein belongs to the UbiD family. Homohexamer. Prenylated FMN serves as cofactor. It depends on Mn(2+) as a cofactor.

The protein resides in the cell membrane. It carries out the reaction a 4-hydroxy-3-(all-trans-polyprenyl)benzoate + H(+) = a 2-(all-trans-polyprenyl)phenol + CO2. The protein operates within cofactor biosynthesis; ubiquinone biosynthesis. Catalyzes the decarboxylation of 3-octaprenyl-4-hydroxy benzoate to 2-octaprenylphenol, an intermediate step in ubiquinone biosynthesis. This is 3-octaprenyl-4-hydroxybenzoate carboxy-lyase from Salmonella paratyphi A (strain ATCC 9150 / SARB42).